The sequence spans 126 residues: Histone H2B type 1-B (126 aa).

Positions 1 to 12 (MPEPSKSAPAPK) are enriched in low complexity. Residues 1–35 (MPEPSKSAPAPKKGSKKAITKAQKKDGKKRKRSRK) are disordered. P2 is subject to N-acetylproline. E3 carries the ADP-ribosyl glutamic acid modification. K6 carries the N6-(2-hydroxyisobutyryl)lysine; alternate modification. The residue at position 6 (K6) is an N6-(beta-hydroxybutyryl)lysine; alternate. K6 is subject to N6-acetyllysine; alternate. K6 bears the N6-butyryllysine; alternate mark. Residue K6 is modified to N6-crotonyllysine; alternate. K6 is modified (N6-lactoyllysine; alternate). A Glycyl lysine isopeptide (Lys-Gly) (interchain with G-Cter in SUMO2); alternate cross-link involves residue K6. The residue at position 7 (S7) is an ADP-ribosylserine. Residue K12 is modified to N6-(beta-hydroxybutyryl)lysine; alternate. 2 positions are modified to N6-acetyllysine; alternate: K12 and K13. K12 and K13 each carry N6-crotonyllysine; alternate. K12 carries the post-translational modification N6-lactoyllysine; alternate. K13 carries the N6-(2-hydroxyisobutyryl)lysine; alternate modification. A Phosphoserine; by STK4/MST1 modification is found at S15. N6-acetyllysine; alternate occurs at positions 16, 17, 21, and 24. An N6-crotonyllysine; alternate mark is found at K16, K17, K21, and K24. N6-lactoyllysine; alternate occurs at positions 16, 17, 21, and 24. N6-(beta-hydroxybutyryl)lysine; alternate is present on residues K17 and K21. K17 is subject to N6-glutaryllysine; alternate. Residues K21 and K24 each carry the N6-(2-hydroxyisobutyryl)lysine; alternate modification. Residue K21 is modified to N6-butyryllysine; alternate. A Glycyl lysine isopeptide (Lys-Gly) (interchain with G-Cter in SUMO2); alternate cross-link involves residue K21. Position 25 is an N6-(2-hydroxyisobutyryl)lysine (K25). Residue K35 is modified to N6-(2-hydroxyisobutyryl)lysine; alternate. K35 is subject to N6-(beta-hydroxybutyryl)lysine; alternate. K35 is subject to N6-crotonyllysine; alternate. K35 is modified (N6-glutaryllysine; alternate). Position 35 is an N6-succinyllysine; alternate (K35). K35 is covalently cross-linked (Glycyl lysine isopeptide (Lys-Gly) (interchain with G-Cter in ubiquitin); alternate). E36 is modified (polyADP-ribosyl glutamic acid). S37 bears the Phosphoserine; by AMPK mark. N6-(2-hydroxyisobutyryl)lysine; alternate is present on residues K44, K47, and K58. Residue K44 is modified to N6-lactoyllysine; alternate. N6-glutaryllysine; alternate is present on residues K44 and K47. Residue K47 is modified to N6-methyllysine; alternate. At K58 the chain carries N6,N6-dimethyllysine; alternate. Dimethylated arginine is present on R80. At K86 the chain carries N6-(2-hydroxyisobutyryl)lysine; alternate. At K86 the chain carries N6-(beta-hydroxybutyryl)lysine; alternate. K86 carries the post-translational modification N6-acetyllysine; alternate. K86 bears the N6-lactoyllysine; alternate mark. At K86 the chain carries N6,N6,N6-trimethyllysine; alternate. R87 and R93 each carry omega-N-methylarginine. K109 is modified (N6-(2-hydroxyisobutyryl)lysine; alternate). K109 is modified (N6-lactoyllysine; alternate). Position 109 is an N6-glutaryllysine; alternate (K109). An N6-methyllysine; alternate modification is found at K109. S113 carries an O-linked (GlcNAc) serine glycan. Position 116 is a phosphothreonine (T116). An N6-(2-hydroxyisobutyryl)lysine; alternate mark is found at K117 and K121. N6-(beta-hydroxybutyryl)lysine; alternate is present on residues K117 and K121. 2 positions are modified to N6-lactoyllysine; alternate: K117 and K121. K117 and K121 each carry N6-glutaryllysine; alternate. K117 and K121 each carry N6-succinyllysine; alternate. An N6-malonyllysine; alternate modification is found at K117. The residue at position 117 (K117) is an N6-methylated lysine; alternate. K121 is covalently cross-linked (Glycyl lysine isopeptide (Lys-Gly) (interchain with G-Cter in ubiquitin); alternate).

Belongs to the histone H2B family. The nucleosome is a histone octamer containing two molecules each of H2A, H2B, H3 and H4 assembled in one H3-H4 heterotetramer and two H2A-H2B heterodimers. The octamer wraps approximately 147 bp of DNA. Post-translationally, monoubiquitination at Lys-35 (H2BK34Ub) by the MSL1/MSL2 dimer is required for histone H3 'Lys-4' (H3K4me) and 'Lys-79' (H3K79me) methylation and transcription activation at specific gene loci, such as HOXA9 and MEIS1 loci. Similarly, monoubiquitination at Lys-121 (H2BK120Ub) by the RNF20/40 complex gives a specific tag for epigenetic transcriptional activation and is also prerequisite for histone H3 'Lys-4' and 'Lys-79' methylation. It also functions cooperatively with the FACT dimer to stimulate elongation by RNA polymerase II. H2BK120Ub also acts as a regulator of mRNA splicing: deubiquitination by USP49 is required for efficient cotranscriptional splicing of a large set of exons. In terms of processing, phosphorylation at Ser-37 (H2BS36ph) by AMPK in response to stress promotes transcription. Phosphorylated on Ser-15 (H2BS14ph) by STK4/MST1 during apoptosis; which facilitates apoptotic chromatin condensation. Also phosphorylated on Ser-15 in response to DNA double strand breaks (DSBs), and in correlation with somatic hypermutation and immunoglobulin class-switch recombination. GlcNAcylation at Ser-113 promotes monoubiquitination of Lys-121. It fluctuates in response to extracellular glucose, and associates with transcribed genes. Post-translationally, ADP-ribosylated by PARP1 or PARP2 on Ser-7 (H2BS6ADPr) in response to DNA damage. H2BS6ADPr promotes recruitment of CHD1L. Mono-ADP-ribosylated on Glu-3 (H2BE2ADPr) by PARP3 in response to single-strand breaks. Poly ADP-ribosylation on Glu-36 (H2BE35ADPr) by PARP1 regulates adipogenesis: it inhibits phosphorylation at Ser-37 (H2BS36ph), thereby blocking expression of pro-adipogenetic genes. In terms of processing, crotonylation (Kcr) is specifically present in male germ cells and marks testis-specific genes in post-meiotic cells, including X-linked genes that escape sex chromosome inactivation in haploid cells. Crotonylation marks active promoters and enhancers and confers resistance to transcriptional repressors. It is also associated with post-meiotically activated genes on autosomes. Lactylated in macrophages by EP300/P300 by using lactoyl-CoA directly derived from endogenous or exogenous lactate, leading to stimulates gene transcription.

The protein localises to the nucleus. It localises to the chromosome. In terms of biological role, core component of nucleosome. Nucleosomes wrap and compact DNA into chromatin, limiting DNA accessibility to the cellular machineries which require DNA as a template. Histones thereby play a central role in transcription regulation, DNA repair, DNA replication and chromosomal stability. DNA accessibility is regulated via a complex set of post-translational modifications of histones, also called histone code, and nucleosome remodeling. The polypeptide is Histone H2B type 1-B (Homo sapiens (Human)).